The sequence spans 896 residues: Alanine--tRNA ligase (896 aa).

Residues His580, His584, Cys683, and His687 each coordinate Zn(2+).

Belongs to the class-II aminoacyl-tRNA synthetase family. Requires Zn(2+) as cofactor.

Its subcellular location is the cytoplasm. It catalyses the reaction tRNA(Ala) + L-alanine + ATP = L-alanyl-tRNA(Ala) + AMP + diphosphate. Catalyzes the attachment of alanine to tRNA(Ala) in a two-step reaction: alanine is first activated by ATP to form Ala-AMP and then transferred to the acceptor end of tRNA(Ala). Also edits incorrectly charged Ser-tRNA(Ala) and Gly-tRNA(Ala) via its editing domain. In Mycolicibacterium smegmatis (strain ATCC 700084 / mc(2)155) (Mycobacterium smegmatis), this protein is Alanine--tRNA ligase.